Here is a 788-residue protein sequence, read N- to C-terminus: MTATSPAFFSPQEIAAEGLKPEEYAEIVRRLGRHPNKAELGMFGVMWSEHCCYKNSRPLLKQFPTEGPRILVGPGENAGVVDLGDGLQLAFKIESHNHPSAVEPFQGAATGVGGILRDIFTMGARPIALLNSLRFGSLEDAKTQRLFQGVVAGISHYGNCVGVPTVGGEVYFDPAYSGNPLVNVMALGLMETQEIVKSGASGLGNPVLYVGSTTGRDGMGGASFASAELSDQSIDDRPAVQVGDPFLEKSLIEACLEAFKTGAVVAAQDMGAAGITCSTSEMAAKGGVGIELDLDKIPARETGMVPYEYLLSESQERMLFVAHKGREQELIDIFHRWGLQAVVAGTVIAEPIVRILFQGGVAAEIPAEALAENTPLYNRELLAEPPEYARQAWEWTPDSLPACTTAGIEIQGGQQSWNDILLTLLDTPTIASKNWVYRQYDHQVQNNTVILPGGADAAVIRLRPLEEIPNLKSKIPNLKLGVAATVDCNPRYVYLHPYEGAKAVVAEAARNLSCVGAEPLAVTDNLNFGSPEKPIGYWQLAEACRGLAEGCRELATPVTGGNVSLYNETLDSQGIPQPIYPTPVVGMVGLIPDITKICGQGWQASGDVIYLLGLPLASKISLGASEYLATIHNTVAGKPPLVDFDLERRVQKVCREGIRNGWIRSAHDSAEGGVAIALAECCIAGNLGAEINLEIAPMQNRVDEMLFAEGGARILVSVTSAQQAIWESYLQEHLGQQWQILGTVGNFETGLGVFTTDNQILIKVSIEDMSDRYSHAIARRIATNTAVS.

Residue His-50 is part of the active site. Residues Tyr-53 and Lys-92 each coordinate ATP. Glu-94 is a Mg(2+) binding site. Substrate-binding positions include Ser-95–His-98 and Arg-117. His-96 acts as the Proton acceptor in catalysis. Asp-118 is a binding site for Mg(2+). Residue Gln-241 participates in substrate binding. Asp-269 contributes to the Mg(2+) binding site. Glu-313–Gln-315 provides a ligand contact to substrate. 2 residues coordinate ATP: Asp-524 and Gly-561. Asn-562 is a Mg(2+) binding site. Substrate is bound at residue Ser-564.

This sequence belongs to the FGAMS family. As to quaternary structure, monomer. Part of the FGAM synthase complex composed of 1 PurL, 1 PurQ and 2 PurS subunits.

The protein localises to the cytoplasm. It catalyses the reaction N(2)-formyl-N(1)-(5-phospho-beta-D-ribosyl)glycinamide + L-glutamine + ATP + H2O = 2-formamido-N(1)-(5-O-phospho-beta-D-ribosyl)acetamidine + L-glutamate + ADP + phosphate + H(+). It participates in purine metabolism; IMP biosynthesis via de novo pathway; 5-amino-1-(5-phospho-D-ribosyl)imidazole from N(2)-formyl-N(1)-(5-phospho-D-ribosyl)glycinamide: step 1/2. Part of the phosphoribosylformylglycinamidine synthase complex involved in the purines biosynthetic pathway. Catalyzes the ATP-dependent conversion of formylglycinamide ribonucleotide (FGAR) and glutamine to yield formylglycinamidine ribonucleotide (FGAM) and glutamate. The FGAM synthase complex is composed of three subunits. PurQ produces an ammonia molecule by converting glutamine to glutamate. PurL transfers the ammonia molecule to FGAR to form FGAM in an ATP-dependent manner. PurS interacts with PurQ and PurL and is thought to assist in the transfer of the ammonia molecule from PurQ to PurL. The protein is Phosphoribosylformylglycinamidine synthase subunit PurL of Nostoc punctiforme (strain ATCC 29133 / PCC 73102).